A 172-amino-acid polypeptide reads, in one-letter code: Gastrula zinc finger protein XlCGF51.1A (172 aa).

6 C2H2-type zinc fingers span residues 6–28 (FSCSDCGARFTYRSLLRRHNKIH), 34–56 (LICSECGKPFTSESALTAHQRSH), 62–84 (FSCTDCEKCFAQRMHLIEHQRTH), 90–112 (FSCTVCGEMFTYRAQFSKHMLKH), 122–144 (LDCSHCGKHFTSRSDLTVHRKSH), and 150–172 (LQCSDCGKCFKYQSQLASHQRVH).

This sequence belongs to the krueppel C2H2-type zinc-finger protein family.

It localises to the nucleus. Its function is as follows. May be involved in transcriptional regulation. This is Gastrula zinc finger protein XlCGF51.1A from Xenopus laevis (African clawed frog).